A 393-amino-acid polypeptide reads, in one-letter code: Phosphoglycerate kinase (393 aa).

Substrate contacts are provided by residues 22-24 (DFN), Arg-37, 60-63 (HLGR), Arg-119, and Arg-152. ATP contacts are provided by residues Lys-202, Gly-293, Glu-324, and 350–353 (GGDS).

Belongs to the phosphoglycerate kinase family. Monomer.

Its subcellular location is the cytoplasm. It catalyses the reaction (2R)-3-phosphoglycerate + ATP = (2R)-3-phospho-glyceroyl phosphate + ADP. It participates in carbohydrate degradation; glycolysis; pyruvate from D-glyceraldehyde 3-phosphate: step 2/5. This is Phosphoglycerate kinase (pgk) from Borreliella burgdorferi (strain ATCC 35210 / DSM 4680 / CIP 102532 / B31) (Borrelia burgdorferi).